A 152-amino-acid polypeptide reads, in one-letter code: Perlwapin (152 aa).

Residues 1–18 form the signal peptide; sequence LILCVVVCTAAVLGTAAG. Residues 19–61 enclose the WAP 1 domain; that stretch reads YESQLPGCPPGAYPAICARYCYSDRDCASGYYCCNTGCLNICV. Cystine bridges form between Cys-26-Cys-52, Cys-35-Cys-56, Cys-39-Cys-51, Cys-45-Cys-60, Cys-69-Cys-95, Cys-77-Cys-100, Cys-82-Cys-94, Cys-88-Cys-103, Cys-112-Cys-139, Cys-122-Cys-142, Cys-126-Cys-138, and Cys-132-Cys-146. The WAP 2; atypical domain maps to 62-107; that stretch reads PKPKPGLCPSITQSPCRGNVCNNDQDCPGNRKCCGKPGCKRCYRPK. Positions 108 to 150 constitute a WAP 3 domain; it reads KPGSCPARKYEAGPCVVYCDGDFDCPGDKKCCGGCPRLCEKPC.

As to expression, component of the acid-soluble and acid-insoluble organic matrix of prismatic shell layers (at protein level).

The protein resides in the secreted. Its function is as follows. Inhibits growth of calcium carbonate crystals. May inhibit growth of certain crystallographic planes in the mineral phase of nacre in the shell. The protein is Perlwapin of Haliotis asinina (Donkey's ear abalone).